The primary structure comprises 924 residues: Inositol polyphosphate 4-phosphatase type II (924 aa).

Basic and acidic residues predominate over residues 1 to 13; the sequence is MEIKEEGASEEGQ. Disordered regions lie at residues 1-24, 481-516, and 546-570; these read MEIKEEGASEEGQHFLPTAQANDP, ILKKPPSPKSSTEESSPQDQPPVMRGQDSIPHHSDY, and DGGSEGSGGNNDGEKEPSLTDAIPS. Residues 23-165 enclose the C2 domain; sequence DPGDCQFTSI…LKSKEQLLVL (143 aa).

It belongs to the inositol 3,4-bisphosphate 4-phosphatase family. In terms of tissue distribution, widely expressed with highest levels occurring in the skeletal muscle and heart.

The enzyme catalyses a 1,2-diacyl-sn-glycero-3-phospho-(1D-myo-inositol-3,4-bisphosphate) + H2O = a 1,2-diacyl-sn-glycero-3-phospho-(1D-myo-inositol-3-phosphate) + phosphate. The catalysed reaction is 1D-myo-inositol 1,3,4-trisphosphate + H2O = 1D-myo-inositol 1,3-bisphosphate + phosphate. It catalyses the reaction 1D-myo-inositol 3,4-bisphosphate + H2O = 1D-myo-inositol 3-phosphate + phosphate. It functions in the pathway signal transduction; phosphatidylinositol signaling pathway. With respect to regulation, strongly inhibited by inositol hexakisphosphate. In terms of biological role, catalyzes the hydrolysis of the 4-position phosphate of phosphatidylinositol 3,4-bisphosphate, inositol 1,3,4-trisphosphate and inositol 3,4-trisphosphate. Plays a role in the late stages of macropinocytosis by dephosphorylating phosphatidylinositol 3,4-bisphosphate in membrane ruffles. The lipid phosphatase activity is critical for tumor suppressor function. Antagonizes the PI3K-AKT/PKB signaling pathway by dephosphorylating phosphoinositides and thereby modulating cell cycle progression and cell survival. This Homo sapiens (Human) protein is Inositol polyphosphate 4-phosphatase type II (INPP4B).